The sequence spans 530 residues: Sulfate adenylyltransferase (530 aa).

Positions 1-178 (MPIPAPHGGK…IQGLDYPTHY (178 aa)) are N-terminal. The tract at residues 179–410 (DYIPFRKTPT…LRESNPPRSK (232 aa)) is catalytic. Residue Gln-208 coordinates sulfate. ATP-binding positions include 208–211 (QTRN) and 304–307 (GRDH). Residues Thr-209, Arg-210, and Asn-211 contribute to the active site. Arg-210 is a sulfate binding site. Ala-308 is a binding site for sulfate. An ATP-binding site is contributed by Val-348. Residues 411 to 530 (QGFAIVIDSS…LVSQGFYQQS (120 aa)) form a required for oligomerization; adenylyl-sulfate kinase-like region.

It belongs to the sulfate adenylyltransferase family. Homohexamer. Dimer of trimers.

Its subcellular location is the cytoplasm. It catalyses the reaction sulfate + ATP + H(+) = adenosine 5'-phosphosulfate + diphosphate. The protein operates within sulfur metabolism; hydrogen sulfide biosynthesis; sulfite from sulfate: step 1/3. In terms of biological role, catalyzes the first intracellular reaction of sulfate assimilation, forming adenosine-5'-phosphosulfate (APS) from inorganic sulfate and ATP. Plays an important role in sulfate activation as a component of the biosynthesis pathway of sulfur-containing amino acids. This is Sulfate adenylyltransferase from Debaryomyces hansenii (strain ATCC 36239 / CBS 767 / BCRC 21394 / JCM 1990 / NBRC 0083 / IGC 2968) (Yeast).